The following is a 235-amino-acid chain: MPKLSKRLAGLASKIEDRTYGPLEAIALVKDNANAKFDETMEAHVRLGIDPKYTDQQLRTTVALPNGTGQTVRIAVVTSGEKVAAAKAAGAELAGDEDLVEAISKGEMNFDLLIATPDMMPKVAKLGRVLGPRGLMPNPKAGTVTTDLAAAIKDFKAGKLEFRADRTGIVHVRFGKASFTADALLENLKTLQETIDRNKPSGAKGRYWKSLYVTSTMGPSVEVDFSALQEIGQEG.

This sequence belongs to the universal ribosomal protein uL1 family. Part of the 50S ribosomal subunit.

Binds directly to 23S rRNA. The L1 stalk is quite mobile in the ribosome, and is involved in E site tRNA release. Functionally, protein L1 is also a translational repressor protein, it controls the translation of the L11 operon by binding to its mRNA. The chain is Large ribosomal subunit protein uL1 from Synechococcus sp. (strain CC9902).